A 208-amino-acid chain; its full sequence is Large ribosomal subunit protein uL4 (208 aa).

The tract at residues 45–84 (RQGTHKVKNRSEVRGGGKKPYRQKGTGHARQGSSRSGLMS) is disordered. Over residues 60-71 (GGKKPYRQKGTG) the composition is skewed to basic residues.

It belongs to the universal ribosomal protein uL4 family. In terms of assembly, part of the 50S ribosomal subunit.

One of the primary rRNA binding proteins, this protein initially binds near the 5'-end of the 23S rRNA. It is important during the early stages of 50S assembly. It makes multiple contacts with different domains of the 23S rRNA in the assembled 50S subunit and ribosome. Its function is as follows. Forms part of the polypeptide exit tunnel. The sequence is that of Large ribosomal subunit protein uL4 from Prosthecochloris aestuarii (strain DSM 271 / SK 413).